Reading from the N-terminus, the 421-residue chain is Ankyrin repeat domain-containing protein 61 (421 aa).

ANK repeat units follow at residues 27-57 (TLHS…NQPL), 74-103 (QPIF…DPEV), 107-146 (QGFT…NAVL), 166-195 (NKHS…QVNA), 199-228 (SSMT…NVNC), 233-272 (TGNT…QVNA), 276-305 (EGQT…NVNI), and 309-342 (NGES…PLRL).

The protein is Ankyrin repeat domain-containing protein 61 (Ankrd61) of Mus musculus (Mouse).